We begin with the raw amino-acid sequence, 294 residues long: Putative HTH-type transcriptional regulatory protein STK_12680 (294 aa).

Residues 123 to 175 (LKKKREEMGLSLGEVAQALGVSRISIYDYEREDSYVSIDIAEKLVELFGDDIL) enclose the HTH cro/C1-type domain. The H-T-H motif DNA-binding region spans 134 to 153 (LGEVAQALGVSRISIYDYER).

The sequence is that of Putative HTH-type transcriptional regulatory protein STK_12680 from Sulfurisphaera tokodaii (strain DSM 16993 / JCM 10545 / NBRC 100140 / 7) (Sulfolobus tokodaii).